The sequence spans 2879 residues: Peramine synthetase ppzA (2879 aa).

Positions 1 to 12 (MTYDEGGHRNNE) are enriched in basic and acidic residues. The segment at 1–52 (MTYDEGGHRNNEETPQDVNMSSNNEGMSTSSPTGSYGEIIGQATVSVPQEDQ) is disordered. Residues 16 to 34 (QDVNMSSNNEGMSTSSPTG) are compositionally biased toward polar residues. The tract at residues 351-747 (QEQCRLQPNT…VGRKDTQVKI (397 aa)) is adenylation 1. A Carrier 1 domain is found at 882-958 (QPLSDMERLL…DLSRQSKYIE (77 aa)). S919 carries the post-translational modification O-(pantetheine 4'-phosphoryl)serine. Positions 997 to 1410 (DAYPCTPLQE…ITILTTEDLE (414 aa)) are condensation. Residues 1433–1827 (DKVQHRPNAP…LSFVRRKDTT (395 aa)) form an adenylation 2 region. The tract at residues 1958–2050 (LEIGCGSGMM…KYLVKLIQDI (93 aa)) is methylation (Met) domain. Residues 2370–2448 (WPTTDTGKEL…RLLLDCCCDD (79 aa)) form the Carrier 2 domain. Position 2407 is an O-(pantetheine 4'-phosphoryl)serine (S2407). The tract at residues 2500-2817 (TVLLTGANGF…LEDMLQDLDD (318 aa)) is thiesterase (TE) domain.

The protein belongs to the NRP synthetase family. The cofactor is pantetheine 4'-phosphate.

The catalysed reaction is (S)-1-pyrroline-5-carboxylate + L-arginine + S-adenosyl-L-methionine + 2 ATP = peramine + 2 AMP + S-adenosyl-L-homocysteine + 2 diphosphate + H2O + 2 H(+). The protein operates within secondary metabolite biosynthesis. Its function is as follows. Nonribosomal peptide synthetase; part of the gene cluster that mediates the biosynthesis of pyrrolopyrazines, secondary metabolites showing insecticidal activity. The single multifunctional NRPS ppzA is responsible for the biosynthesis of peramine. The condensation domain of ppzA is proposed to catalyze formation of a peptide bond between 1-pyrroline-5-carboxylate and arginine. The methylation domain of ppzA would catalyze the N-methylation of the alpha-amino group of arginine. The reductase domain is proposed to be responsible for reduction of the thioester and the cyclization to form an iminium ion resulting in release from the peptide synthetase. Deprotonation of this intermediate and oxidation of the pyrroline ring would give rise to peramine. This final oxidation to give the pyrrole functionality may be spontaneous. In Epichloe species that produce only peramine, the peramine synthetase gene is not localized in a gene cluster, in contrast to Metarhizium species that contain additional pyrrolopyrazine biosynthesis genes. The 2-oxoglutarate-Fe(II) type oxidoreductase ppzC hydroxylates peramine to yield the newly identified compound 8-hydroxyperamine whereas ppzD converts L-proline into trans-4-hydroxy-L-proline, a precursor of peramine biosynthesis. This Metarhizium rileyi (strain RCEF 4871) (Nomuraea rileyi) protein is Peramine synthetase ppzA.